A 176-amino-acid polypeptide reads, in one-letter code: Peptide deformylase (176 aa).

Fe cation-binding residues include Cys97 and His139. Glu140 is an active-site residue. His143 lines the Fe cation pocket.

This sequence belongs to the polypeptide deformylase family. It depends on Fe(2+) as a cofactor.

It carries out the reaction N-terminal N-formyl-L-methionyl-[peptide] + H2O = N-terminal L-methionyl-[peptide] + formate. In terms of biological role, removes the formyl group from the N-terminal Met of newly synthesized proteins. Requires at least a dipeptide for an efficient rate of reaction. N-terminal L-methionine is a prerequisite for activity but the enzyme has broad specificity at other positions. The protein is Peptide deformylase of Thermomicrobium roseum (strain ATCC 27502 / DSM 5159 / P-2).